The primary structure comprises 253 residues: HTH-type transcriptional regulator YdeO (253 aa).

Residues 137–233 (GKVRNIVNMK…GNSPKRVSKE (97 aa)) form the HTH araC/xylS-type domain. 2 DNA-binding regions (H-T-H motif) span residues 154-175 (KDIC…KQEQ) and 200-223 (VNKI…RKHF).

Functionally, induces the expression of gadE and mdtEF. Could also regulate the expression of other genes involved in acid resistance. This Escherichia coli O157:H7 protein is HTH-type transcriptional regulator YdeO.